Consider the following 450-residue polypeptide: Chaperone protein DnaK (450 aa).

Position 174 is a phosphothreonine; by autocatalysis (Thr-174).

It belongs to the heat shock protein 70 family.

Functionally, acts as a chaperone. This chain is Chaperone protein DnaK (dnaK), found in Megasphaera elsdenii.